Reading from the N-terminus, the 293-residue chain is Deubiquitinase OTUD6B (293 aa).

Disordered stretches follow at residues 1-43 (MEEV…RRKQ) and 57-114 (QKHE…LEKE). The region spanning 147 to 284 (LQIKEISSDG…GEHYNSVEPL (138 aa)) is the OTU domain. The cys-loop stretch occupies residues 152-158 (ISSDGHC). Residue aspartate 155 is part of the active site. The active-site Nucleophile is the cysteine 158. The segment at 219–229 (VADTAAWGGQL) is variable-loop. The tract at residues 267–277 (YMRHAYGLGEH) is his-loop. Residue histidine 277 is part of the active site.

The enzyme catalyses Thiol-dependent hydrolysis of ester, thioester, amide, peptide and isopeptide bonds formed by the C-terminal Gly of ubiquitin (a 76-residue protein attached to proteins as an intracellular targeting signal).. Deubiquitinating enzyme that may play a role in the ubiquitin-dependent regulation of different cellular processes. This chain is Deubiquitinase OTUD6B (otud6b), found in Danio rerio (Zebrafish).